Here is a 175-residue protein sequence, read N- to C-terminus: Adenine phosphoribosyltransferase (175 aa).

It belongs to the purine/pyrimidine phosphoribosyltransferase family. As to quaternary structure, homodimer.

It is found in the cytoplasm. The enzyme catalyses AMP + diphosphate = 5-phospho-alpha-D-ribose 1-diphosphate + adenine. Its pathway is purine metabolism; AMP biosynthesis via salvage pathway; AMP from adenine: step 1/1. Catalyzes a salvage reaction resulting in the formation of AMP, that is energically less costly than de novo synthesis. In Francisella philomiragia subsp. philomiragia (strain ATCC 25017 / CCUG 19701 / FSC 153 / O#319-036), this protein is Adenine phosphoribosyltransferase.